Reading from the N-terminus, the 576-residue chain is MSLEPTQTVSGTPPMLHQRTHKQVYPLRMETIPILESDSKATLQSNEPTQKDEEETEYFENKQSVSNLSPDLKFKRHKNKHIQGFPTLGERLDNLQDIKKAKRVENFNSSAPIADDNHSGDATANATANATANATANVNASAMPAPYMPYYYYYHPMNAPTPAMIPYPGSPMHSIMPNSSLQPFYSQPTAAGGPDMTTPQNISSSQQLLPAPQLFPYGSFHQQQLQQPHYIQRTRERKKSIGSQRGRRLSMLASQANGGSTIISPHKDIPEEDFYTVVGNASFGKNLQIRQLFNWCLMRSLHKLELKAKNQEEEGELEHLTKKSKLESTKAETDYVDPKRLAMVIIKEFVDDLKKDHIAIDWEDEEKYEDEDEEKILDNTENYDDTELRQLFQENDDDDDDDDEVDYSEIQRSRRKFSERRKALPKEPKKLLPNSKNVENTKNLSILTSKVNAIKNEVKEWAVTLDTSRPDLEWQELTSFSSQPLEPLSDTEEPDLAIADVETKLETKVDELRYQSHILNSHSLALNEITNSKVNKLNIETMRKISSETDDDHSQVINPQQLLKGLSLSFSKKLDL.

Polar residues predominate over residues 1 to 11; that stretch reads MSLEPTQTVSG. Disordered regions lie at residues 1 to 22, 35 to 64, 185 to 205, and 227 to 246; these read MSLE…RTHK, LESD…NKQS, YSQP…ISSS, and QPHY…SQRG. Basic residues predominate over residues 235-246; the sequence is RERKKSIGSQRG. Phosphoserine is present on Ser250. Residues 412 to 437 form a disordered region; that stretch reads RSRRKFSERRKALPKEPKKLLPNSKN. The segment covering 420-430 has biased composition (basic and acidic residues); it reads RRKALPKEPKK.

In terms of assembly, component of the MIND kinetochore complex, which is composed of at least MTW1, NNF1, NSL1 and DSN1. Interacts with NSL1.

It localises to the nucleus. The protein localises to the chromosome. Its subcellular location is the centromere. The protein resides in the kinetochore. Functionally, acts as an essential component of the kinetochore MIND complex, which is required for the spindle checkpoint and kinetochore integrity. MIND plays a role in establishing a bipolar spindle-kinetochore interaction by joining kinetochore subunits contacting DNA to those contacting microtubules. The polypeptide is Kinetochore-associated protein DSN1 (DSN1) (Saccharomyces cerevisiae (strain ATCC 204508 / S288c) (Baker's yeast)).